The sequence spans 643 residues: Phosphatidylinositol-3,5-bisphosphate 3-phosphatase MTMR2 (643 aa).

Composition is skewed to polar residues over residues 1–12 (MEKSSSCESLGS) and 23–40 (DSLSSASTSHSENSVHTK). Residues 1-56 (MEKSSSCESLGSQPAAARPPSVDSLSSASTSHSENSVHTKSASVVSSDSISTSADN) form a disordered region. Phosphoserine occurs at positions 6 and 9. Residues 41–55 (SASVVSSDSISTSAD) are compositionally biased toward low complexity. S58 carries the post-translational modification Phosphoserine. The GRAM domain maps to 68–139 (NKLAEMEEPP…GVINRVEKIG (72 aa)). The region spanning 205–580 (GWKLYDPLLE…RHLELWVGYY (376 aa)) is the Myotubularin phosphatase domain. N330, N355, and I356 together coordinate a 1,2-diacyl-sn-glycero-3-phospho-(1D-myo-inositol-3,5-bisphosphate). A 1,2-diacyl-sn-glycero-3-phospho-(1D-myo-inositol-3-phosphate) is bound by residues N330, N355, and I356. The active-site Phosphocysteine intermediate is the C417. S418, D419, G420, W421, D422, R423, R459, and R463 together coordinate a 1,2-diacyl-sn-glycero-3-phospho-(1D-myo-inositol-3,5-bisphosphate). A 1,2-diacyl-sn-glycero-3-phospho-(1D-myo-inositol-3-phosphate) contacts are provided by S418, D419, G420, W421, D422, and R423. R463 serves as a coordination point for a 1,2-diacyl-sn-glycero-3-phospho-(1D-myo-inositol-3-phosphate). Positions 593-627 (IHNRYKELLAKRAELQKKVEELQREISNRSTSSSE) form a coiled coil. Residues 615–643 (QREISNRSTSSSERASSPAQCVTPVQTVV) form a disordered region. Low complexity predominate over residues 620-631 (NRSTSSSERASS). Positions 632-643 (PAQCVTPVQTVV) are enriched in polar residues.

Belongs to the protein-tyrosine phosphatase family. Non-receptor class myotubularin subfamily. In terms of assembly, homodimer (via coiled-coil domain). Heterotetramer consisting of one MTMR2 dimer and one SBF2/MTMR13 dimer; specifically in peripheral nerves stabilizes SBF2/MTMR13 at the membranes and increases MTMR2 catalytic activity towards phosphatidylinositol 3,5-bisphosphate and to a lesser extent towards phosphatidylinositol 3-phosphate. Heterodimer with SBF1/MTMR5; acts as an adapter for the phosphatase MTMR2 to regulate MTMR2 catalytic activity and subcellular location. Heterodimer with MTMR12. Phosphorylation at Ser-58 decreases MTMR2 localization to endocytic vesicular structures.

Its subcellular location is the cytoplasm. The protein resides in the early endosome membrane. It is found in the perinuclear region. The protein localises to the cell projection. It localises to the axon. Its subcellular location is the endosome membrane. The catalysed reaction is a 1,2-diacyl-sn-glycero-3-phospho-(1D-myo-inositol-3,5-bisphosphate) + H2O = a 1,2-diacyl-sn-glycero-3-phospho-(1D-myo-inositol-5-phosphate) + phosphate. The enzyme catalyses a 1,2-diacyl-sn-glycero-3-phospho-(1D-myo-inositol-3-phosphate) + H2O = a 1,2-diacyl-sn-glycero-3-phospho-(1D-myo-inositol) + phosphate. It carries out the reaction 1,2-dioctanoyl-sn-glycero-3-phospho-(1-D-myo-inositol-3-phosphate) + H2O = 1,2-dioctanoyl-sn-glycero-3-phospho-(1D-myo-inositol) + phosphate. It catalyses the reaction 1,2-dioctanoyl-sn-glycero-3-phospho-(1D-myo-inositol-3,5-bisphosphate) + H2O = 1,2-dioctanoyl-sn-glycero-3-phospho-(1D-myo-inositol-5-phosphate) + phosphate. In terms of biological role, lipid phosphatase that specifically dephosphorylates the D-3 position of phosphatidylinositol 3-phosphate and phosphatidylinositol 3,5-bisphosphate, generating phosphatidylinositol and phosphatidylinositol 5-phosphate. Regulates the level of these phosphoinositides critical for various biological processes including autophagy initiation and autophagosome maturation. This chain is Phosphatidylinositol-3,5-bisphosphate 3-phosphatase MTMR2, found in Pongo abelii (Sumatran orangutan).